Here is a 258-residue protein sequence, read N- to C-terminus: 5'-nucleotidase SurE (258 aa).

A divalent metal cation is bound by residues Asp14, Asp15, Ser45, and Asn101.

This sequence belongs to the SurE nucleotidase family. The cofactor is a divalent metal cation.

The protein localises to the cytoplasm. It catalyses the reaction a ribonucleoside 5'-phosphate + H2O = a ribonucleoside + phosphate. Its function is as follows. Nucleotidase that shows phosphatase activity on nucleoside 5'-monophosphates. This is 5'-nucleotidase SurE from Chlorobium phaeobacteroides (strain DSM 266 / SMG 266 / 2430).